The primary structure comprises 469 residues: Gustatory receptor for sugar taste 64f (469 aa).

Over 1-117 (MKILPKLERK…SFSWRNIRTC (117 aa)) the chain is Cytoplasmic. Residues 118-138 (FSLLFIASSLANFGLSLFKVL) form a helical membrane-spanning segment. At 139–146 (NNPISFNS) the chain is on the extracellular side. Residues 147–167 (IKPIIFRGSVLLVLIVALNLA) traverse the membrane as a helical segment. The Cytoplasmic segment spans residues 168–199 (RQWPQLMMYWHTVEKDLPQYKTQLTKWKMGHT). A helical membrane pass occupies residues 200-220 (ISMVMLLGMMLSFAEHILSMV). At 221–265 (SAINYASFCNRTADPIQNYFLRTNDEIFFVTSYSTTLALWGKFQN) the chain is on the extracellular side. The N-linked (GlcNAc...) asparagine glycan is linked to Asn230. Residues 266-286 (VFSTFIWNYMDLFVMIVSIGL) traverse the membrane as a helical segment. At 287–330 (ASKFRQLNDDLRNFKGMNMAPSYWSERRIQYRNICILCDKMDDA) the chain is on the cytoplasmic side. The helical transmembrane segment at 331–351 (ISLITMVSFSNNLYFICVQLL) threads the bilayer. The Extracellular portion of the chain corresponds to 352–353 (RS). A helical transmembrane segment spans residues 354-374 (LNTMPSVAHAVYFYFSLIFLI). The Cytoplasmic segment spans residues 375–435 (GRTLAVSLYS…GMKFFHLTRK (61 aa)). Residues 436 to 456 (LVLSVAGTIVTYELVLIQFHE) traverse the membrane as a helical segment. The Extracellular segment spans residues 457-469 (DNDLWDCDQSYYS).

This sequence belongs to the insect chemoreceptor superfamily. Gustatory receptor (GR) family. Gr5a subfamily. As to expression, expressed in Gr5a-expressing sugar-sensing cells.

It localises to the cell membrane. Its function is as follows. One of the few identified sugar gustatory receptors identified so far and which promotes the starvation-induced increase of feeding motivation. Required in combination with Gr64a to detect sucrose, maltose, and glucose. The chain is Gustatory receptor for sugar taste 64f (Gr64f) from Drosophila melanogaster (Fruit fly).